The primary structure comprises 246 residues: ATP synthase subunit a (246 aa).

The propeptide at 1 to 3 (MIY) is removed in mature form. The next 7 membrane-spanning stretches (helical) occupy residues 25 to 45 (VNNY…SVFL), 51 to 71 (LGFN…LNMV), 79 to 99 (GGMY…ANLV), 112 to 132 (LVAI…MGLS), 138 to 158 (FFAL…LVLI), 178 to 198 (VLSG…LMGS), and 203 to 223 (FMGG…EFAI).

This sequence belongs to the ATPase A chain family. F-type ATPases have 2 components, CF(1) - the catalytic core - and CF(0) - the membrane proton channel. CF(1) has five subunits: alpha(3), beta(3), gamma(1), delta(1), epsilon(1). CF(0) has three main subunits: a, b and c.

It localises to the mitochondrion inner membrane. Functionally, mitochondrial membrane ATP synthase (F(1)F(0) ATP synthase or Complex V) produces ATP from ADP in the presence of a proton gradient across the membrane which is generated by electron transport complexes of the respiratory chain. F-type ATPases consist of two structural domains, F(1) - containing the extramembraneous catalytic core and F(0) - containing the membrane proton channel, linked together by a central stalk and a peripheral stalk. During catalysis, ATP synthesis in the catalytic domain of F(1) is coupled via a rotary mechanism of the central stalk subunits to proton translocation. Key component of the proton channel; it may play a direct role in the translocation of protons across the membrane. This is ATP synthase subunit a (ATP6) from Debaryomyces hansenii (strain ATCC 36239 / CBS 767 / BCRC 21394 / JCM 1990 / NBRC 0083 / IGC 2968) (Yeast).